A 353-amino-acid chain; its full sequence is GTPase Obg (353 aa).

In terms of domain architecture, Obg spans 1 to 159 (MKFLDEAKVY…RWIWLRLKLI (159 aa)). An OBG-type G domain is found at 160-327 (ADAGLVGLPN…ALRALAAVIG (168 aa)). GTP-binding positions include 166-173 (GLPNAGKS), 191-195 (FTTLH), 212-215 (DIPG), 279-282 (NKID), and 308-310 (SGV). The Mg(2+) site is built by S173 and T193.

The protein belongs to the TRAFAC class OBG-HflX-like GTPase superfamily. OBG GTPase family. In terms of assembly, monomer. Mg(2+) is required as a cofactor.

The protein localises to the cytoplasm. Its function is as follows. An essential GTPase which binds GTP, GDP and possibly (p)ppGpp with moderate affinity, with high nucleotide exchange rates and a fairly low GTP hydrolysis rate. Plays a role in control of the cell cycle, stress response, ribosome biogenesis and in those bacteria that undergo differentiation, in morphogenesis control. In Rhodopseudomonas palustris (strain BisB5), this protein is GTPase Obg.